We begin with the raw amino-acid sequence, 187 residues long: MKSTKRNTFFGLAALGALGLGYSVYKSFITSDKPSSLINLGINQERKSYTRQKVAIIVSESILAIQLPIQEILKNTKDVVFVLAPTIAKDEFLRENEVDSGLSFKVIETGTAIGCFHVLKHIKATYNIFNLHDFLPSSTKTSSDNEQLTFDLEEYVNLHLNNFLQNVVELPSDSTSIQETVNQYIYN.

A helical transmembrane segment spans residues 7 to 29; that stretch reads NTFFGLAALGALGLGYSVYKSFI.

This sequence belongs to the peroxin-22 family. As to quaternary structure, interacts with PEX4.

It is found in the peroxisome membrane. Functionally, involved in peroxisome biogenesis. This Komagataella pastoris (Yeast) protein is Peroxisome assembly protein 22 (PEX22).